Reading from the N-terminus, the 445-residue chain is Phosphoglucosamine mutase (445 aa).

S102 (phosphoserine intermediate) is an active-site residue. Residues S102, D241, D243, and D245 each coordinate Mg(2+). Residue S102 is modified to Phosphoserine.

It belongs to the phosphohexose mutase family. The cofactor is Mg(2+). Post-translationally, activated by phosphorylation.

The enzyme catalyses alpha-D-glucosamine 1-phosphate = D-glucosamine 6-phosphate. In terms of biological role, catalyzes the conversion of glucosamine-6-phosphate to glucosamine-1-phosphate. This is Phosphoglucosamine mutase from Variovorax paradoxus (strain S110).